The sequence spans 320 residues: ATP-dependent 6-phosphofructokinase (320 aa).

Gly-12 is an ATP binding site. Residues 22 to 26 (RGVVR) and 55 to 60 (RYSVSD) each bind ADP. ATP-binding positions include 73–74 (RF) and 103–106 (GDGS). Asp-104 is a Mg(2+) binding site. A substrate-binding site is contributed by 126–128 (TID). Asp-128 acts as the Proton acceptor in catalysis. Arg-155 is an ADP binding site. Residues Arg-163 and 170–172 (MGR) contribute to the substrate site. ADP contacts are provided by residues 186-188 (GCE), Lys-212, and 214-216 (KKH). Residues Glu-223, Arg-244, and 250–253 (HIQR) contribute to the substrate site.

The protein belongs to the phosphofructokinase type A (PFKA) family. ATP-dependent PFK group I subfamily. Prokaryotic clade 'B1' sub-subfamily. Homotetramer. Mg(2+) serves as cofactor.

It localises to the cytoplasm. It carries out the reaction beta-D-fructose 6-phosphate + ATP = beta-D-fructose 1,6-bisphosphate + ADP + H(+). It functions in the pathway carbohydrate degradation; glycolysis; D-glyceraldehyde 3-phosphate and glycerone phosphate from D-glucose: step 3/4. Its activity is regulated as follows. Allosterically activated by ADP and other diphosphonucleosides, and allosterically inhibited by phosphoenolpyruvate. Catalyzes the phosphorylation of D-fructose 6-phosphate to fructose 1,6-bisphosphate by ATP, the first committing step of glycolysis. In Cronobacter sakazakii (strain ATCC BAA-894) (Enterobacter sakazakii), this protein is ATP-dependent 6-phosphofructokinase.